A 198-amino-acid polypeptide reads, in one-letter code: Segregation and condensation protein B (198 aa).

Belongs to the ScpB family. In terms of assembly, homodimer. Homodimerization may be required to stabilize the binding of ScpA to the Smc head domains. Component of a cohesin-like complex composed of ScpA, ScpB and the Smc homodimer, in which ScpA and ScpB bind to the head domain of Smc. The presence of the three proteins is required for the association of the complex with DNA.

The protein resides in the cytoplasm. Participates in chromosomal partition during cell division. May act via the formation of a condensin-like complex containing Smc and ScpA that pull DNA away from mid-cell into both cell halves. The protein is Segregation and condensation protein B of Acetivibrio thermocellus (strain ATCC 27405 / DSM 1237 / JCM 9322 / NBRC 103400 / NCIMB 10682 / NRRL B-4536 / VPI 7372) (Clostridium thermocellum).